Consider the following 239-residue polypeptide: Norbelladine 4'-O-methyltransferase (239 aa).

S-adenosyl-L-methionine is bound by residues Val55, Glu77, 79–80 (GV), Ser85, Asp103, and Ala132. Position 155 (Asp155) interacts with a divalent metal cation. An S-adenosyl-L-methionine-binding site is contributed by Asp157. Residues Asp181 and Asn182 each contribute to the a divalent metal cation site.

It belongs to the class I-like SAM-binding methyltransferase superfamily. Cation-dependent O-methyltransferase family. It depends on Mg(2+) as a cofactor. As to expression, mostly expressed in bulbs, and, to a lower extent, in stems and roots.

The catalysed reaction is norbelladine + S-adenosyl-L-methionine = 4'-O-methylnorbelladine + S-adenosyl-L-homocysteine + H(+). It participates in alkaloid biosynthesis. In terms of biological role, 4'-O-methyltransferase converting norbelladine to 4'-O-methylnorbelladine. 4'-O-methylnorbelladine is a precursor to all Amaryllidaceae alkaloids such as galanthamine, lycorine and haemanthamine, and including haemanthamine- and crinamine-type alkaloids, promising anticancer agents. This is Norbelladine 4'-O-methyltransferase from Narcissus pseudonarcissus (Daffodil).